We begin with the raw amino-acid sequence, 310 residues long: Olfactory receptor 10G2 (310 aa).

The Extracellular portion of the chain corresponds to 1–29; that stretch reads MGKTKNTSLDAVVTDFILLGLSHPPNLRS. Residue N6 is glycosylated (N-linked (GlcNAc...) asparagine). The chain crosses the membrane as a helical span at residues 30–50; the sequence is LLFLVFFIIYILTQLGNLLIL. Residues 51–58 lie on the Cytoplasmic side of the membrane; sequence LTMWADPK. A helical membrane pass occupies residues 59 to 80; the sequence is LCARPMYILLGVLSFLDMWLSS. Over 81–104 the chain is Extracellular; it reads VTVPLLILDFTPSIKAIPFGGCVA. An intrachain disulfide couples C102 to C194. Residues 105–125 form a helical membrane-spanning segment; sequence QLYFFHFLGSTQCFLYTLMAY. Residues 126-144 lie on the Cytoplasmic side of the membrane; the sequence is DRYLAICQPLRYPVLMNGR. A helical membrane pass occupies residues 145-165; the sequence is LCTVLVAGAWVAGSMHGSIQA. Residues 166 to 202 lie on the Extracellular side of the membrane; that stretch reads TLTFRLPYCGPNQVDYFICDIPAVLRLACADTTVNEL. The helical transmembrane segment at 203–222 threads the bilayer; the sequence is VTFVDVGVVAASCFMLILLS. At 223 to 242 the chain is on the cytoplasmic side; sequence YANIVNAILKIRTTDGRRRA. Residues 243–263 form a helical membrane-spanning segment; it reads FSTCGSHLIVVTVYYVPCIFI. At 264–274 the chain is on the extracellular side; that stretch reads YLRAGSKDPLD. Residues 275–295 form a helical membrane-spanning segment; the sequence is GAAAVFYTVVTPLLNPLIYTL. The Cytoplasmic segment spans residues 296-310; that stretch reads RNQEVKSALKRITAG.

This sequence belongs to the G-protein coupled receptor 1 family.

The protein localises to the cell membrane. In terms of biological role, odorant receptor. The polypeptide is Olfactory receptor 10G2 (OR10G2) (Homo sapiens (Human)).